A 430-amino-acid polypeptide reads, in one-letter code: Tyrosine--tRNA ligase (430 aa).

Position 32 (Tyr-32) interacts with L-tyrosine. The 'HIGH' region motif lies at 37 to 46; that stretch reads PTADSLHIGH. 2 residues coordinate L-tyrosine: Tyr-172 and Gln-176. A 'KMSKS' region motif is present at residues 232–236; the sequence is KFGKT. ATP is bound at residue Lys-235. The region spanning 362 to 429 is the S4 RNA-binding domain; sequence VKAVDLFVDN…GKKNYYLIIA (68 aa).

This sequence belongs to the class-I aminoacyl-tRNA synthetase family. TyrS type 1 subfamily. In terms of assembly, homodimer.

Its subcellular location is the cytoplasm. It carries out the reaction tRNA(Tyr) + L-tyrosine + ATP = L-tyrosyl-tRNA(Tyr) + AMP + diphosphate + H(+). In terms of biological role, catalyzes the attachment of tyrosine to tRNA(Tyr) in a two-step reaction: tyrosine is first activated by ATP to form Tyr-AMP and then transferred to the acceptor end of tRNA(Tyr). This is Tyrosine--tRNA ligase from Bacteroides fragilis (strain ATCC 25285 / DSM 2151 / CCUG 4856 / JCM 11019 / LMG 10263 / NCTC 9343 / Onslow / VPI 2553 / EN-2).